The chain runs to 2260 residues: Protein Ycf2 (2260 aa).

1614 to 1621 (GSIGTGRS) is an ATP binding site.

The protein belongs to the Ycf2 family.

It localises to the plastid. It is found in the chloroplast stroma. Functionally, probable ATPase of unknown function. Its presence in a non-photosynthetic plant (Epifagus virginiana) and experiments in tobacco indicate that it has an essential function which is probably not related to photosynthesis. The protein is Protein Ycf2 of Dioscorea elephantipes (Elephant's foot yam).